The chain runs to 1196 residues: Truncated transposon Ty1-A Gag-Pol polyprotein (1196 aa).

One can recognise an Integrase catalytic domain in the interval 101–276 (NSYEPFQYLH…AGLDISTLLP (176 aa)). Mg(2+) is bound by residues aspartate 112 and aspartate 177. Disordered regions lie at residues 397–528 (SKAV…ETEK), 533–552 (RSPS…NIVP), and 571–628 (DLPL…DNET). The span at 401–410 (SPTDSTPPST) shows a compositional bias: low complexity. A compositionally biased stretch (polar residues) spans 446 to 456 (STPQISNIEST). A compositionally biased stretch (basic and acidic residues) spans 479-494 (ESSHASKSKDFRHSDS). 2 stretches are compositionally biased toward polar residues: residues 495–523 (YSEN…QISD) and 542–552 (PENNSSHNIVP). A Bipartite nuclear localization signal motif is present at residues 619–653 (KKRSLEDNETEIKVSRDTWNTKNMRSLEPPRSKKR). Positions 779-917 (NNYYITQLDI…DILGLEIKYQ (139 aa)) constitute a Reverse transcriptase Ty1/copia-type domain. Residues aspartate 787, aspartate 868, aspartate 869, aspartate 1051, glutamate 1093, and aspartate 1126 each coordinate Mg(2+). The 143-residue stretch at 1051–1193 (DASYGNQPYY…IKTFKLLTNK (143 aa)) folds into the RNase H Ty1/copia-type domain.

Post-translationally, initially, virus-like particles (VLPs) are composed of the structural unprocessed proteins Gag and Gag-Pol, and also contain the host initiator methionine tRNA (tRNA(i)-Met) which serves as a primer for minus-strand DNA synthesis, and a dimer of genomic Ty RNA. Processing of the polyproteins occurs within the particle and proceeds by an ordered pathway, called maturation. First, the protease (PR) is released by autocatalytic cleavage of the Gag-Pol polyprotein yielding capsid protein p45 and a Pol-p154 precursor protein. This cleavage is a prerequisite for subsequent processing of Pol-p154 at the remaining sites to release the mature structural and catalytic proteins. Maturation takes place prior to the RT reaction and is required to produce transposition-competent VLPs.

It localises to the cytoplasm. It is found in the nucleus. The enzyme catalyses DNA(n) + a 2'-deoxyribonucleoside 5'-triphosphate = DNA(n+1) + diphosphate. The catalysed reaction is Endonucleolytic cleavage to 5'-phosphomonoester.. Reverse transcriptase/ribonuclease H (RT) is a multifunctional enzyme that catalyzes the conversion of the retro-elements RNA genome into dsDNA within the VLP. The enzyme displays a DNA polymerase activity that can copy either DNA or RNA templates, and a ribonuclease H (RNase H) activity that cleaves the RNA strand of RNA-DNA heteroduplexes during plus-strand synthesis and hydrolyzes RNA primers. The conversion leads to a linear dsDNA copy of the retrotransposon that includes long terminal repeats (LTRs) at both ends. In terms of biological role, integrase (IN) targets the VLP to the nucleus, where a subparticle preintegration complex (PIC) containing at least integrase and the newly synthesized dsDNA copy of the retrotransposon must transit the nuclear membrane. Once in the nucleus, integrase performs the integration of the dsDNA into the host genome. This chain is Truncated transposon Ty1-A Gag-Pol polyprotein (TY1B-A), found in Saccharomyces cerevisiae (strain ATCC 204508 / S288c) (Baker's yeast).